Here is a 335-residue protein sequence, read N- to C-terminus: Probable nicotianamine synthase 3 (335 aa).

Belongs to the nicotianamine synthase (NAS)-like family.

It carries out the reaction 3 S-adenosyl-L-methionine = nicotianamine + 3 S-methyl-5'-thioadenosine + 3 H(+). Synthesizes nicotianamine, a polyamine that is the first intermediate in the synthesis of the phytosiderophores of the mugineic acid type found in gramineae which serves as a sensor for the physiological iron status within the plant, and/or might be involved in the transport of iron. The protein is Probable nicotianamine synthase 3 (NAS3) of Hordeum vulgare (Barley).